Here is a 216-residue protein sequence, read N- to C-terminus: 3,4-dihydroxy-2-butanone 4-phosphate synthase (216 aa).

D-ribulose 5-phosphate contacts are provided by residues 33-34 (RE), Asp38, 146-150 (RRGHT), and Glu170. Position 34 (Glu34) interacts with Mg(2+). A Mg(2+)-binding site is contributed by His149.

The protein belongs to the DHBP synthase family. Homodimer. Mg(2+) serves as cofactor. It depends on Mn(2+) as a cofactor.

It carries out the reaction D-ribulose 5-phosphate = (2S)-2-hydroxy-3-oxobutyl phosphate + formate + H(+). Its pathway is cofactor biosynthesis; riboflavin biosynthesis; 2-hydroxy-3-oxobutyl phosphate from D-ribulose 5-phosphate: step 1/1. Its function is as follows. Catalyzes the conversion of D-ribulose 5-phosphate to formate and 3,4-dihydroxy-2-butanone 4-phosphate. The sequence is that of 3,4-dihydroxy-2-butanone 4-phosphate synthase from Pseudomonas putida (strain ATCC 47054 / DSM 6125 / CFBP 8728 / NCIMB 11950 / KT2440).